Consider the following 102-residue polypeptide: Small ribosomal subunit protein uS10 (102 aa).

The protein belongs to the universal ribosomal protein uS10 family. As to quaternary structure, part of the 30S ribosomal subunit.

Functionally, involved in the binding of tRNA to the ribosomes. The sequence is that of Small ribosomal subunit protein uS10 from Clostridium kluyveri (strain NBRC 12016).